A 573-amino-acid chain; its full sequence is Ribosomal RNA-processing protein 9 (573 aa).

The tract at residues 1-63 is disordered; that stretch reads MSDVTQQKKR…FEGENPADKR (63 aa). Serine 2 bears the N-acetylserine mark. The segment covering 25 to 58 has biased composition (acidic residues); sequence DEEITDPSSNEDEQLEVSDEEDALESEEEFEGEN. A coiled-coil region spans residues 32-106; that stretch reads SSNEDEQLEV…KERTIDEYNN (75 aa). Serine 50 is subject to Phosphoserine. 6 WD repeats span residues 234-273, 278-317, 320-359, 397-435, 471-509, and 516-562; these read GHYDEILTVAASPDGKYVVTGGRDRKLIVWSTESLSPVKV, DRRGEVLSLAFRKNSDQLYASCADFKIRTYSINQFSQLEI, GHHDIVEDISALAMERCVTVGARDRTAMLWKIPDETRLTF, FCEGSIDVVSMVDDFHFITGSDNGNICLWSLAKKKPIFT, QPFWITSLYAIPYSNVFISGSWSGSLKVWKISDNLRSFE, and GAKG…ARNG.

This sequence belongs to the WD repeat RRP9 family. As to quaternary structure, interacts with UTP25. Component of the ribosomal small subunit (SSU) processome composed of at least 40 protein subunits and snoRNA U3.

The protein localises to the nucleus. It localises to the nucleolus. Involved in nucleolar processing of pre-18S ribosomal RNA. Required for efficient pre-rRNA cleavage at sites A0, A1 and A2, and biosynthesis of 18S rRNA. This is Ribosomal RNA-processing protein 9 (RRP9) from Saccharomyces cerevisiae (strain ATCC 204508 / S288c) (Baker's yeast).